The chain runs to 324 residues: Acetyl-coenzyme A carboxylase carboxyl transferase subunit beta (324 aa).

Residues 1 to 16 are compositionally biased toward low complexity; sequence MTKNNNDLSNSSSNPP. The tract at residues 1-51 is disordered; the sequence is MTKNNNDLSNSSSNPPSNRPVAGKEAELEIQRETHAAQSGQSESWLSRPIP. Residues 22 to 35 show a composition bias toward basic and acidic residues; it reads AGKEAELEIQRETH. Positions 36–45 are enriched in polar residues; that stretch reads AAQSGQSESW. The 257-residue stretch at 68 to 324 folds into the CoA carboxyltransferase N-terminal domain; that stretch reads PSTECPQCHS…YRLLAKLTHV (257 aa). Zn(2+) contacts are provided by Cys-72, Cys-75, Cys-91, and Cys-94. The C4-type zinc-finger motif lies at 72–94; it reads CPQCHSMITNTALIFNAYVCPHC.

It belongs to the AccD/PCCB family. Acetyl-CoA carboxylase is a heterohexamer composed of biotin carboxyl carrier protein (AccB), biotin carboxylase (AccC) and two subunits each of ACCase subunit alpha (AccA) and ACCase subunit beta (AccD). It depends on Zn(2+) as a cofactor.

The protein localises to the cytoplasm. The catalysed reaction is N(6)-carboxybiotinyl-L-lysyl-[protein] + acetyl-CoA = N(6)-biotinyl-L-lysyl-[protein] + malonyl-CoA. Its pathway is lipid metabolism; malonyl-CoA biosynthesis; malonyl-CoA from acetyl-CoA: step 1/1. Functionally, component of the acetyl coenzyme A carboxylase (ACC) complex. Biotin carboxylase (BC) catalyzes the carboxylation of biotin on its carrier protein (BCCP) and then the CO(2) group is transferred by the transcarboxylase to acetyl-CoA to form malonyl-CoA. The chain is Acetyl-coenzyme A carboxylase carboxyl transferase subunit beta from Psychrobacter sp. (strain PRwf-1).